The following is a 549-amino-acid chain: DDB1- and CUL4-associated factor 11 (549 aa).

The segment covering 1-24 has biased composition (low complexity); sequence MGSRNSSSAGSGSLEPSEGLSRRG. A disordered region spans residues 1-40; it reads MGSRNSSSAGSGSLEPSEGLSRRGTGLRRSEEEEEEDEDV. Residues Ser73 and Ser75 each carry the phosphoserine modification. WD repeat units lie at residues 170–210, 216–258, 263–302, 305–345, 353–392, 435–480, and 481–520; these read TYSQ…HKFK, DVGW…TALD, ERRF…RTLQ, SHED…EDDP, GHQD…SREG, GVLH…KKLT, and NHKA…YFQD.

Interacts with DDB1 and CUL4A.

It participates in protein modification; protein ubiquitination. May function as a substrate receptor for CUL4-DDB1 E3 ubiquitin-protein ligase complex. The chain is DDB1- and CUL4-associated factor 11 (Dcaf11) from Mus musculus (Mouse).